Here is a 329-residue protein sequence, read N- to C-terminus: R-linalool synthase (329 aa).

A Mg(2+)-binding site is contributed by aspartate 79. Residues aspartate 79–aspartate 83 carry the DDXXD motif motif. Arginine 172 lines the substrate pocket. The Mg(2+) site is built by asparagine 218 and serine 222. The NXXXSXXXD motif signature appears at asparagine 218 to aspartate 226. Lysine 225 is a binding site for substrate. A Mg(2+)-binding site is contributed by aspartate 226. Position 308–309 (arginine 308–tyrosine 309) interacts with substrate.

This sequence belongs to the terpene synthase family. In terms of assembly, homodimer. It depends on Mg(2+) as a cofactor.

It carries out the reaction (2E)-geranyl diphosphate + H2O = (R)-linalool + diphosphate. The enzyme catalyses (2E,6E)-farnesyl diphosphate + H2O = (6E)-nerolidol + diphosphate. In vitro, catalyzes the formation of R-linalool from geranyl diphosphate (GPP). Can also accept farnesyl diphosphate (FPP) as substrate to produce trans-nerolidol. The chain is R-linalool synthase from Streptomyces clavuligerus.